The primary structure comprises 305 residues: Nucleotide-binding protein Mjls_2437 (305 aa).

28–35 (GLSGAGRG) contacts ATP. Position 79–82 (79–82 (DVRS)) interacts with GTP.

This sequence belongs to the RapZ-like family.

In terms of biological role, displays ATPase and GTPase activities. In Mycobacterium sp. (strain JLS), this protein is Nucleotide-binding protein Mjls_2437.